The primary structure comprises 247 residues: ATP synthase subunit a, chloroplastic (247 aa).

A run of 5 helical transmembrane segments spans residues 38-58, 95-115, 134-154, 199-219, and 220-240; these read QVLITSWVVIAILLGSAIIAV, VPFIGTMFLFIFVSNWSGALL, INTTVALALLTSVAYFYAGLS, LVVVVLVSLVPLVVPIPVMFL, and GLFTSGIQALIFATLAAAYIG.

This sequence belongs to the ATPase A chain family. As to quaternary structure, F-type ATPases have 2 components, CF(1) - the catalytic core - and CF(0) - the membrane proton channel. CF(1) has five subunits: alpha(3), beta(3), gamma(1), delta(1), epsilon(1). CF(0) has four main subunits: a, b, b' and c.

It is found in the plastid. It localises to the chloroplast thylakoid membrane. Its function is as follows. Key component of the proton channel; it plays a direct role in the translocation of protons across the membrane. This is ATP synthase subunit a, chloroplastic from Cucumis sativus (Cucumber).